Here is a 200-residue protein sequence, read N- to C-terminus: NADH-quinone oxidoreductase subunit C (200 aa).

Belongs to the complex I 30 kDa subunit family. NDH-1 is composed of 14 different subunits. Subunits NuoB, C, D, E, F, and G constitute the peripheral sector of the complex.

The protein localises to the cell inner membrane. It catalyses the reaction a quinone + NADH + 5 H(+)(in) = a quinol + NAD(+) + 4 H(+)(out). NDH-1 shuttles electrons from NADH, via FMN and iron-sulfur (Fe-S) centers, to quinones in the respiratory chain. The immediate electron acceptor for the enzyme in this species is believed to be ubiquinone. Couples the redox reaction to proton translocation (for every two electrons transferred, four hydrogen ions are translocated across the cytoplasmic membrane), and thus conserves the redox energy in a proton gradient. This Ralstonia pickettii (strain 12J) protein is NADH-quinone oxidoreductase subunit C.